A 510-amino-acid chain; its full sequence is Cobyric acid synthase (510 aa).

In terms of domain architecture, GATase cobBQ-type spans 262-460 (EIKVGIIKLP…IHGIFENDEW (199 aa)). Catalysis depends on C343, which acts as the Nucleophile. Residue H452 is part of the active site.

This sequence belongs to the CobB/CobQ family. CobQ subfamily.

It functions in the pathway cofactor biosynthesis; adenosylcobalamin biosynthesis. Functionally, catalyzes amidations at positions B, D, E, and G on adenosylcobyrinic A,C-diamide. NH(2) groups are provided by glutamine, and one molecule of ATP is hydrogenolyzed for each amidation. The chain is Cobyric acid synthase from Prochlorococcus marinus (strain MIT 9515).